The sequence spans 147 residues: UPF0178 protein VP2328 (147 aa).

This sequence belongs to the UPF0178 family.

The protein is UPF0178 protein VP2328 of Vibrio parahaemolyticus serotype O3:K6 (strain RIMD 2210633).